The sequence spans 227 residues: Pectinesterase inhibitor 28 (227 aa).

A signal peptide spans 1-25; the sequence is MASSMAPAAAMAILLLALLMPATLC. The tract at residues 28-50 is disordered; that stretch reads SGPPSSKHGHGGHAKRAPPPASP. Over residues 34–43 the composition is skewed to basic residues; the sequence is KHGHGGHAKR. Cysteines 66 and 75 form a disulfide. Asn67, Asn104, and Asn117 each carry an N-linked (GlcNAc...) asparagine glycan. Cys139 and Cys179 are joined by a disulfide.

It belongs to the PMEI family. Expressed in roots, leaves, culms and flag leaves.

It localises to the secreted. The protein localises to the extracellular space. Its subcellular location is the apoplast. Functionally, pectin methylesterase (PME) inhibitor that inhibits PME in vitro. Functions as a critical structural modulator by regulating the degree of pectin methylesterification and the physiochemical properties of the cell wall components. The protein is Pectinesterase inhibitor 28 of Oryza sativa subsp. japonica (Rice).